A 359-amino-acid chain; its full sequence is Serine/threonine-protein phosphatase 2A activator 2 (359 aa).

The protein belongs to the PTPA-type PPIase family.

It localises to the cytoplasm. It carries out the reaction [protein]-peptidylproline (omega=180) = [protein]-peptidylproline (omega=0). Its function is as follows. PPIases accelerate the folding of proteins. It catalyzes the cis-trans isomerization of proline imidic peptide bonds in oligopeptides. Acts as a regulatory subunit for PP2A-like phosphatases modulating their activity or substrate specificity, probably by inducing a conformational change in the catalytic subunit, a direct target of the PPIase. Can reactivate inactive phosphatase PP2A-phosphatase methylesterase complexes (PP2Ai) in presence of ATP and Mg(2+) by dissociating the inactive form from the complex. This chain is Serine/threonine-protein phosphatase 2A activator 2 (RRD2), found in Eremothecium gossypii (strain ATCC 10895 / CBS 109.51 / FGSC 9923 / NRRL Y-1056) (Yeast).